Consider the following 319-residue polypeptide: ATP-dependent 6-phosphofructokinase (319 aa).

Residue Gly-11 participates in ATP binding. Position 21–25 (21–25 (RAVVR)) interacts with ADP. ATP-binding positions include 72–73 (RS) and 102–105 (GDGS). A Mg(2+)-binding site is contributed by Asp-103. Position 125 to 127 (125 to 127 (TID)) interacts with substrate. Residue Asp-127 is the Proton acceptor of the active site. Arg-154 is a binding site for ADP. Substrate contacts are provided by residues Arg-162 and 169–171 (MGR). ADP-binding positions include 185-187 (GAE), Arg-211, and 213-215 (KKH). Substrate-binding positions include Glu-222, Arg-243, and 249–252 (HIQR).

This sequence belongs to the phosphofructokinase type A (PFKA) family. ATP-dependent PFK group I subfamily. Prokaryotic clade 'B1' sub-subfamily. In terms of assembly, homotetramer. Mg(2+) serves as cofactor.

Its subcellular location is the cytoplasm. The catalysed reaction is beta-D-fructose 6-phosphate + ATP = beta-D-fructose 1,6-bisphosphate + ADP + H(+). It functions in the pathway carbohydrate degradation; glycolysis; D-glyceraldehyde 3-phosphate and glycerone phosphate from D-glucose: step 3/4. With respect to regulation, allosterically activated by ADP and other diphosphonucleosides, and allosterically inhibited by phosphoenolpyruvate. In terms of biological role, catalyzes the phosphorylation of D-fructose 6-phosphate to fructose 1,6-bisphosphate by ATP, the first committing step of glycolysis. The chain is ATP-dependent 6-phosphofructokinase from Oceanobacillus iheyensis (strain DSM 14371 / CIP 107618 / JCM 11309 / KCTC 3954 / HTE831).